The sequence spans 128 residues: UPF0102 protein Acry_2261 (128 aa).

The protein belongs to the UPF0102 family.

This chain is UPF0102 protein Acry_2261, found in Acidiphilium cryptum (strain JF-5).